The primary structure comprises 337 residues: Fructose-1,6-bisphosphatase class 1 (337 aa).

Mg(2+) is bound by residues glutamate 89, aspartate 112, leucine 114, and aspartate 115. Residues 115–118, asparagine 208, tyrosine 241, and lysine 271 contribute to the substrate site; that span reads DGSS. Residue glutamate 277 coordinates Mg(2+).

It belongs to the FBPase class 1 family. As to quaternary structure, homotetramer. Mg(2+) is required as a cofactor.

It is found in the cytoplasm. It carries out the reaction beta-D-fructose 1,6-bisphosphate + H2O = beta-D-fructose 6-phosphate + phosphate. It participates in carbohydrate biosynthesis; gluconeogenesis. This is Fructose-1,6-bisphosphatase class 1 from Yersinia pseudotuberculosis serotype O:1b (strain IP 31758).